The following is a 393-amino-acid chain: Formate-dependent phosphoribosylglycinamide formyltransferase (393 aa).

N(1)-(5-phospho-beta-D-ribosyl)glycinamide contacts are provided by residues 22–23 (EL) and Glu82. ATP contacts are provided by residues Arg114, Lys155, 160 to 165 (SSGKGQ), 195 to 198 (EGLV), and Glu203. In terms of domain architecture, ATP-grasp spans 119 to 308 (RLAAETLQLP…EFALHVRAFL (190 aa)). Mg(2+) contacts are provided by Glu267 and Glu279. N(1)-(5-phospho-beta-D-ribosyl)glycinamide contacts are provided by residues Asp286, Lys355, and 362 to 363 (RR).

This sequence belongs to the PurK/PurT family. As to quaternary structure, homodimer.

The enzyme catalyses N(1)-(5-phospho-beta-D-ribosyl)glycinamide + formate + ATP = N(2)-formyl-N(1)-(5-phospho-beta-D-ribosyl)glycinamide + ADP + phosphate + H(+). Its pathway is purine metabolism; IMP biosynthesis via de novo pathway; N(2)-formyl-N(1)-(5-phospho-D-ribosyl)glycinamide from N(1)-(5-phospho-D-ribosyl)glycinamide (formate route): step 1/1. Its function is as follows. Involved in the de novo purine biosynthesis. Catalyzes the transfer of formate to 5-phospho-ribosyl-glycinamide (GAR), producing 5-phospho-ribosyl-N-formylglycinamide (FGAR). Formate is provided by PurU via hydrolysis of 10-formyl-tetrahydrofolate. In Yersinia pseudotuberculosis serotype O:3 (strain YPIII), this protein is Formate-dependent phosphoribosylglycinamide formyltransferase.